The chain runs to 161 residues: Urease accessory protein UreE (161 aa).

Residues 133–161 (EPEAGAYQSAPHSHSHAHDHPFVRLPAHS) are disordered.

It belongs to the UreE family.

The protein resides in the cytoplasm. In terms of biological role, involved in urease metallocenter assembly. Binds nickel. Probably functions as a nickel donor during metallocenter assembly. This chain is Urease accessory protein UreE, found in Pseudomonas putida (strain W619).